We begin with the raw amino-acid sequence, 135 residues long: Ribonuclease P protein component (135 aa).

Belongs to the RnpA family. In terms of assembly, consists of a catalytic RNA component (M1 or rnpB) and a protein subunit.

It carries out the reaction Endonucleolytic cleavage of RNA, removing 5'-extranucleotides from tRNA precursor.. Functionally, RNaseP catalyzes the removal of the 5'-leader sequence from pre-tRNA to produce the mature 5'-terminus. It can also cleave other RNA substrates such as 4.5S RNA. The protein component plays an auxiliary but essential role in vivo by binding to the 5'-leader sequence and broadening the substrate specificity of the ribozyme. This Pseudomonas aeruginosa (strain ATCC 15692 / DSM 22644 / CIP 104116 / JCM 14847 / LMG 12228 / 1C / PRS 101 / PAO1) protein is Ribonuclease P protein component.